Reading from the N-terminus, the 284-residue chain is MMMLPEACVANILAFTSPADAFSSSEVSSVFRLAGDSDFVWEKFLPSHYKSLISQSTDHHRIFSSKKEIYRCLCDSLLIDNARKLFKINKFSGKISYILSARDISITYSDHASYCSWSNVSDSRFSESAELITTDRLEIKGKIQTTVLSPNTKYGAYLIMKVTNGAYGLDLVPAETSVKSKNGQNNKNTTYLCCLDEKKQQMKRLFYGNREERMAMTVEAVGGDGKRREPKARDDGWLEIELGEFVTREGEDDEVNMSLTEVKGYQLKGGIVIDGIEVRPIPLK.

The F-box domain occupies 1-44; sequence MMMLPEACVANILAFTSPADAFSSSEVSSVFRLAGDSDFVWEKF.

The polypeptide is F-box protein PP2-B13 (PP2B13) (Arabidopsis thaliana (Mouse-ear cress)).